The primary structure comprises 84 residues: Extender of the chronological lifespan protein 2 (84 aa).

It belongs to the ecl1 family.

It localises to the nucleus. Its function is as follows. Involved in chronological cell aging. The sequence is that of Extender of the chronological lifespan protein 2 (ecl2) from Schizosaccharomyces pombe (strain 972 / ATCC 24843) (Fission yeast).